A 438-amino-acid chain; its full sequence is 3-phosphoshikimate 1-carboxyvinyltransferase (438 aa).

Positions 21, 22, and 26 each coordinate 3-phosphoshikimate. Phosphoenolpyruvate is bound at residue Lys-21. Phosphoenolpyruvate is bound by residues Gly-95 and Arg-123. 4 residues coordinate 3-phosphoshikimate: Ser-167, Gln-169, Asp-315, and Lys-342. Gln-169 is a phosphoenolpyruvate binding site. The active-site Proton acceptor is the Asp-315. Phosphoenolpyruvate-binding residues include Arg-346 and Arg-387.

This sequence belongs to the EPSP synthase family. As to quaternary structure, monomer.

The protein resides in the cytoplasm. The catalysed reaction is 3-phosphoshikimate + phosphoenolpyruvate = 5-O-(1-carboxyvinyl)-3-phosphoshikimate + phosphate. It participates in metabolic intermediate biosynthesis; chorismate biosynthesis; chorismate from D-erythrose 4-phosphate and phosphoenolpyruvate: step 6/7. In terms of biological role, catalyzes the transfer of the enolpyruvyl moiety of phosphoenolpyruvate (PEP) to the 5-hydroxyl of shikimate-3-phosphate (S3P) to produce enolpyruvyl shikimate-3-phosphate and inorganic phosphate. The protein is 3-phosphoshikimate 1-carboxyvinyltransferase of Coxiella burnetii (strain CbuG_Q212) (Coxiella burnetii (strain Q212)).